A 337-amino-acid polypeptide reads, in one-letter code: Ribose-phosphate pyrophosphokinase 4 (337 aa).

Residue Ser2 is modified to N-acetylserine. 2 residues coordinate Mg(2+): Asp158 and His160. The segment at 241 to 256 (GCHVVIVDDLVQSGGT) is binding of phosphoribosylpyrophosphate.

Belongs to the ribose-phosphate pyrophosphokinase family.

It catalyses the reaction D-ribose 5-phosphate + ATP = 5-phospho-alpha-D-ribose 1-diphosphate + AMP + H(+). This Arabidopsis thaliana (Mouse-ear cress) protein is Ribose-phosphate pyrophosphokinase 4 (PRS4).